The primary structure comprises 609 residues: mRNA cap guanine-N(7) methyltransferase (609 aa).

Basic and acidic residues predominate over residues 1–10 (MASKEEERTG). Residues 1–252 (MASKEEERTG…EEDAMRNSQS (252 aa)) form a disordered region. Low complexity-rich tracts occupy residues 28–47 (QPVVPAEPASASASIEATPT) and 70–87 (PQTTTIEPSQQPEQQQKQ). Residues 148–163 (ANDRPISKRKRLEERH) show a composition bias toward basic and acidic residues. The segment covering 193–205 (PRSPSPPLPPRSP) has biased composition (pro residues). The segment covering 233 to 247 (RRQEERERALEEDAM) has biased composition (basic and acidic residues). Residues 278 to 590 (SKIKGLRSFN…KYTPLGFTSA (313 aa)) form the mRNA cap 0 methyltransferase domain. Residue 287–288 (NN) coordinates mRNA. Residues Lys291, Gly314, Asp338, Asp379, 422–424 (MFA), and Tyr427 each bind S-adenosyl-L-methionine.

This sequence belongs to the class I-like SAM-binding methyltransferase superfamily. mRNA cap 0 methyltransferase family.

It is found in the nucleus. The catalysed reaction is a 5'-end (5'-triphosphoguanosine)-ribonucleoside in mRNA + S-adenosyl-L-methionine = a 5'-end (N(7)-methyl 5'-triphosphoguanosine)-ribonucleoside in mRNA + S-adenosyl-L-homocysteine. Responsible for methylating the 5'-cap structure of mRNAs. The chain is mRNA cap guanine-N(7) methyltransferase (abd1) from Aspergillus niger (strain ATCC MYA-4892 / CBS 513.88 / FGSC A1513).